The chain runs to 391 residues: UPF0229 protein BCA_0588 (391 aa).

Residues 1 to 16 (MGEENQPNYTISQENW) are compositionally biased toward polar residues. Disordered regions lie at residues 1 to 31 (MGEENQPNYTISQENWSLHRKGYDDQQRHQE) and 80 to 117 (HVGQGNGDSKVGDVVARDGSGGQKQKGPGKGQGAGDAA). Residues 21–31 (KGYDDQQRHQE) show a composition bias toward basic and acidic residues. Residues 98–115 (GSGGQKQKGPGKGQGAGD) are compositionally biased toward gly residues.

This sequence belongs to the UPF0229 family.

The protein is UPF0229 protein BCA_0588 of Bacillus cereus (strain 03BB102).